A 350-amino-acid polypeptide reads, in one-letter code: Probable deoxyhypusine synthase (350 aa).

NAD(+) contacts are provided by residues Ser96 to Ser100, Thr122 to Gly124, Glu128, and Asp229. Glu127–Glu128 is a binding site for spermidine. Asp234 is a spermidine binding site. Residue Gly276 participates in NAD(+) binding. His281 provides a ligand contact to spermidine. Residue Ser301–Ala302 coordinates NAD(+). Residues Gly307–Asp309 and Glu316–Lys322 contribute to the spermidine site. The active-site Nucleophile is the Lys322. Glu335–Val336 is an NAD(+) binding site.

Belongs to the deoxyhypusine synthase family. NAD(+) serves as cofactor.

It carries out the reaction [eIF5A protein]-L-lysine + spermidine = [eIF5A protein]-deoxyhypusine + propane-1,3-diamine. It functions in the pathway protein modification; eIF5A hypusination. Its function is as follows. Catalyzes the NAD-dependent oxidative cleavage of spermidine and the subsequent transfer of the butylamine moiety of spermidine to the epsilon-amino group of a specific lysine residue of the eIF-5A precursor protein to form the intermediate deoxyhypusine residue. In Schizosaccharomyces pombe (strain 972 / ATCC 24843) (Fission yeast), this protein is Probable deoxyhypusine synthase.